A 161-amino-acid polypeptide reads, in one-letter code: Probable chemoreceptor glutamine deamidase CheD (161 aa).

It belongs to the CheD family.

The enzyme catalyses L-glutaminyl-[protein] + H2O = L-glutamyl-[protein] + NH4(+). Probably deamidates glutamine residues to glutamate on methyl-accepting chemotaxis receptors (MCPs), playing an important role in chemotaxis. In Lachnoclostridium phytofermentans (strain ATCC 700394 / DSM 18823 / ISDg) (Clostridium phytofermentans), this protein is Probable chemoreceptor glutamine deamidase CheD.